Consider the following 167-residue polypeptide: Large ribosomal subunit protein uL10 (167 aa).

Belongs to the universal ribosomal protein uL10 family. As to quaternary structure, part of the ribosomal stalk of the 50S ribosomal subunit. The N-terminus interacts with L11 and the large rRNA to form the base of the stalk. The C-terminus forms an elongated spine to which L12 dimers bind in a sequential fashion forming a multimeric L10(L12)X complex.

In terms of biological role, forms part of the ribosomal stalk, playing a central role in the interaction of the ribosome with GTP-bound translation factors. The polypeptide is Large ribosomal subunit protein uL10 (Dichelobacter nodosus (strain VCS1703A)).